The primary structure comprises 179 residues: Replication restart protein DnaT (179 aa).

The segment at 156-179 is disordered; it reads GGLPKRDVNTVSEPDSQIPPGFRG.

Belongs to the DnaT family. As to quaternary structure, homooligomerizes. Interacts with PriB. Component of the replication restart primosome. Primosome assembly occurs via a 'hand-off' mechanism. PriA binds to replication forks, subsequently PriB then DnaT bind; DnaT then displaces ssDNA to generate the helicase loading substrate.

In terms of biological role, involved in the restart of stalled replication forks, which reloads the replicative helicase on sites other than the origin of replication. Can function in multiple replication restart pathways. Displaces ssDNA from a PriB-ssDNA complex. Probably forms a spiral filament on ssDNA. This chain is Replication restart protein DnaT, found in Shigella dysenteriae serotype 1 (strain Sd197).